The following is a 186-amino-acid chain: Probable peptidoglycan L,D-endopeptidase MepK (186 aa).

The first 30 residues, 1-30 (MNYVDQNKRKWLSLGGIALGISILPNSVLA), serve as a signal peptide directing secretion. Zn(2+)-binding residues include histidine 134, aspartate 141, and histidine 174.

The protein belongs to the peptidase M15 family. Zn(2+) is required as a cofactor.

The protein operates within cell wall biogenesis; cell wall polysaccharide biosynthesis. Functionally, l,D-endopeptidase that cleaves meso-diaminopimelic acid (mDAP)-mDAP cross-links in peptidoglycan. It works in conjunction with other elongation-specific D,D-endopeptidases to make space for efficient incorporation of nascent peptidoglycan strands into the sacculus and thus enable cell wall expansion. This is Probable peptidoglycan L,D-endopeptidase MepK from Haemophilus influenzae (strain ATCC 51907 / DSM 11121 / KW20 / Rd).